The chain runs to 155 residues: Protein-export protein SecB (155 aa).

This sequence belongs to the SecB family. Homotetramer, a dimer of dimers. One homotetramer interacts with 1 SecA dimer.

Its subcellular location is the cytoplasm. Functionally, one of the proteins required for the normal export of preproteins out of the cell cytoplasm. It is a molecular chaperone that binds to a subset of precursor proteins, maintaining them in a translocation-competent state. It also specifically binds to its receptor SecA. The chain is Protein-export protein SecB from Escherichia fergusonii (strain ATCC 35469 / DSM 13698 / CCUG 18766 / IAM 14443 / JCM 21226 / LMG 7866 / NBRC 102419 / NCTC 12128 / CDC 0568-73).